Reading from the N-terminus, the 66-residue chain is Transmembrane protein B66L (66 aa).

An N-terminal signal peptide occupies residues 1–20; it reads MDIKRALILFLLFLVVLSNA. The Extracellular segment spans residues 21 to 40; sequence FVDYIISNFNHAVTCRKPTY. The helical transmembrane segment at 41-61 threads the bilayer; that stretch reads FGIVLQGIFLVILFSIVDYLI. Residues 62–66 are Cytoplasmic-facing; that stretch reads NENIL.

Belongs to the asfivirus B66L family.

The protein resides in the host membrane. This chain is Transmembrane protein B66L, found in Ornithodoros (relapsing fever ticks).